The sequence spans 245 residues: Probable 2-phosphosulfolactate phosphatase (245 aa).

It belongs to the ComB family. Mg(2+) is required as a cofactor.

The enzyme catalyses (2R)-O-phospho-3-sulfolactate + H2O = (2R)-3-sulfolactate + phosphate. This Nostoc sp. (strain PCC 7120 / SAG 25.82 / UTEX 2576) protein is Probable 2-phosphosulfolactate phosphatase.